We begin with the raw amino-acid sequence, 38 residues long: Alpha-conotoxin LvIC (38 aa).

Positions 1–21 (SNGRNAAAGDKPSYWITLAIT) are excised as a propeptide. Intrachain disulfides connect cysteine 23–cysteine 29 and cysteine 24–cysteine 34. Glutamine amide is present on glutamine 35.

This sequence belongs to the conotoxin A superfamily. In terms of processing, the two analogs ([DelQ14]LvIC and [D1G,DelQ14]LvIC) are amidated at their N-terminal Cys. Expressed by the venom gland.

The protein localises to the secreted. Its function is as follows. Alpha-conotoxins bind to the nicotinic acetylcholine receptors (nAChR) and inhibit them. This synthetic peptide inhibits rat alpha-6/alpha-3-beta-4 nAChR (IC(50)=3.3 uM). In Conus lividus (Livid cone), this protein is Alpha-conotoxin LvIC.